The sequence spans 258 residues: TLC domain-containing protein 4 A (258 aa).

7 helical membrane passes run 8-28 (YLISVEPLGFILYYTSLYIWI), 49-71 (IEWTNKIVATISSIVSFSLSCYC), 92-112 (FILKFISFYFLFDALHLIIYY), 118-138 (WPIIIHHLVVGILSYVYIGLY), 144-164 (LTLLYFLLFEITNPFIHMKWF), 170-190 (LENHILYSINGFMMAFFFIFI), and 217-237 (IIFFCFPIITILNLFWTYLVI). The TLC domain occupies 46–245 (SSKIEWTNKI…VIKGILKHLS (200 aa)).

The protein belongs to the TLCD4 family.

The protein localises to the membrane. The chain is TLC domain-containing protein 4 A (tlcd4a) from Dictyostelium discoideum (Social amoeba).